Here is a 113-residue protein sequence, read N- to C-terminus: Putative membrane protein insertion efficiency factor (113 aa).

The protein belongs to the UPF0161 family.

It is found in the cell inner membrane. Its function is as follows. Could be involved in insertion of integral membrane proteins into the membrane. The sequence is that of Putative membrane protein insertion efficiency factor from Campylobacter jejuni subsp. doylei (strain ATCC BAA-1458 / RM4099 / 269.97).